The primary structure comprises 130 residues: Fumarate reductase subunit C (130 aa).

Transmembrane regions (helical) follow at residues 34–54, 60–80, and 109–129; these read VPAV…KGGV, FVGF…LLAA, and IVKT…AVAL.

This sequence belongs to the FrdC family. As to quaternary structure, part of an enzyme complex containing four subunits: a flavoprotein (FrdA), an iron-sulfur protein (FrdB), and two hydrophobic anchor proteins (FrdC and FrdD).

Its subcellular location is the cell inner membrane. Functionally, two distinct, membrane-bound, FAD-containing enzymes are responsible for the catalysis of fumarate and succinate interconversion; fumarate reductase is used in anaerobic growth, and succinate dehydrogenase is used in aerobic growth. Anchors the catalytic components of the fumarate reductase complex to the cell inner membrane, binds quinones. This chain is Fumarate reductase subunit C, found in Serratia proteamaculans (strain 568).